Consider the following 620-residue polypeptide: 1-deoxy-D-xylulose-5-phosphate synthase (620 aa).

Residues His-80 and 121–123 each bind thiamine diphosphate; that span reads GHS. Asp-152 is a binding site for Mg(2+). Thiamine diphosphate-binding positions include 153–154, Asn-181, Tyr-288, and Glu-370; that span reads GA. A Mg(2+)-binding site is contributed by Asn-181.

It belongs to the transketolase family. DXPS subfamily. As to quaternary structure, homodimer. Mg(2+) serves as cofactor. It depends on thiamine diphosphate as a cofactor.

It catalyses the reaction D-glyceraldehyde 3-phosphate + pyruvate + H(+) = 1-deoxy-D-xylulose 5-phosphate + CO2. It functions in the pathway metabolic intermediate biosynthesis; 1-deoxy-D-xylulose 5-phosphate biosynthesis; 1-deoxy-D-xylulose 5-phosphate from D-glyceraldehyde 3-phosphate and pyruvate: step 1/1. In terms of biological role, catalyzes the acyloin condensation reaction between C atoms 2 and 3 of pyruvate and glyceraldehyde 3-phosphate to yield 1-deoxy-D-xylulose-5-phosphate (DXP). The polypeptide is 1-deoxy-D-xylulose-5-phosphate synthase (Escherichia coli (strain K12 / MC4100 / BW2952)).